Reading from the N-terminus, the 510-residue chain is Histidine ammonia-lyase (510 aa).

A cross-link (5-imidazolinone (Ala-Gly)) is located at residues 143–145; the sequence is ASG. At Ser-144 the chain carries 2,3-didehydroalanine (Ser).

Belongs to the PAL/histidase family. In terms of processing, contains an active site 4-methylidene-imidazol-5-one (MIO), which is formed autocatalytically by cyclization and dehydration of residues Ala-Ser-Gly.

It is found in the cytoplasm. The catalysed reaction is L-histidine = trans-urocanate + NH4(+). Its pathway is amino-acid degradation; L-histidine degradation into L-glutamate; N-formimidoyl-L-glutamate from L-histidine: step 1/3. This chain is Histidine ammonia-lyase, found in Psychromonas ingrahamii (strain DSM 17664 / CCUG 51855 / 37).